The following is a 196-amino-acid chain: Phosphoheptose isomerase (196 aa).

The SIS domain maps to 38–196; it reads LIAGYRAGAR…VEHALFAPRQ (159 aa). Residue 53 to 55 participates in substrate binding; that stretch reads NGG. Residues His-62 and Glu-66 each contribute to the Zn(2+) site. Residues Glu-66, 95–96, 121–123, Ser-126, and Gln-173 each bind substrate; these read ND and STS. Zn(2+)-binding residues include Gln-173 and His-181.

The protein belongs to the SIS family. GmhA subfamily. Requires Zn(2+) as cofactor.

It is found in the cytoplasm. The enzyme catalyses 2 D-sedoheptulose 7-phosphate = D-glycero-alpha-D-manno-heptose 7-phosphate + D-glycero-beta-D-manno-heptose 7-phosphate. Its pathway is carbohydrate biosynthesis; D-glycero-D-manno-heptose 7-phosphate biosynthesis; D-glycero-alpha-D-manno-heptose 7-phosphate and D-glycero-beta-D-manno-heptose 7-phosphate from sedoheptulose 7-phosphate: step 1/1. In terms of biological role, catalyzes the isomerization of sedoheptulose 7-phosphate in D-glycero-D-manno-heptose 7-phosphate. The sequence is that of Phosphoheptose isomerase from Mycobacterium bovis (strain ATCC BAA-935 / AF2122/97).